Reading from the N-terminus, the 249-residue chain is Chitooligosaccharide deacetylase (249 aa).

Mg(2+) contacts are provided by His-61 and His-125.

It belongs to the YdjC deacetylase family. ChbG subfamily. As to quaternary structure, homodimer. It depends on Mg(2+) as a cofactor.

The protein resides in the cytoplasm. The enzyme catalyses N,N'-diacetylchitobiose + H2O = N-acetyl-beta-D-glucosaminyl-(1-&gt;4)-D-glucosamine + acetate. It catalyses the reaction diacetylchitobiose-6'-phosphate + H2O = N'-monoacetylchitobiose-6'-phosphate + acetate. Its pathway is glycan degradation; chitin degradation. Its function is as follows. Involved in the degradation of chitin. ChbG is essential for growth on the acetylated chitooligosaccharides chitobiose and chitotriose but is dispensable for growth on cellobiose and chitosan dimer, the deacetylated form of chitobiose. Deacetylation of chitobiose-6-P and chitotriose-6-P is necessary for both the activation of the chb promoter by the regulatory protein ChbR and the hydrolysis of phosphorylated beta-glucosides by the phospho-beta-glucosidase ChbF. Catalyzes the removal of only one acetyl group from chitobiose-6-P to yield monoacetylchitobiose-6-P, the inducer of ChbR and the substrate of ChbF. This is Chitooligosaccharide deacetylase from Escherichia coli (strain K12 / MC4100 / BW2952).